The sequence spans 216 residues: Heart- and neural crest derivatives-expressed protein 1 (216 aa).

Disordered stretches follow at residues 1–20 (MNLVGSYAHHHHHHHSHPPH), 53–109 (APDF…RTES), and 165–203 (ELKKTDGGRESKRKRELPQQPESFPPASGPGEKRIKGRT). Positions 8–18 (AHHHHHHHSHP) are enriched in basic residues. A compositionally biased stretch (low complexity) spans 65–78 (TAVAAAAYGPDARP). A compositionally biased stretch (basic residues) spans 92 to 104 (LPKRKGSGPKKER). The region spanning 94–146 (KRKGSGPKKERRRTESINSAFAELRECIPNVPADTKLSKIKTLRLATSYIAYL) is the bHLH domain. Threonine 107 carries the post-translational modification Phosphothreonine; by PLK4. Position 109 is a phosphoserine; by PLK4 (serine 109). Residues 165–174 (ELKKTDGGRE) show a composition bias toward basic and acidic residues.

Efficient DNA binding requires dimerization with another bHLH protein. Forms homodimers and heterodimers with TCF3 gene products E12 and E47, HAND2 and HEY1, HEY2 and HEYL (hairy-related transcription factors). Interacts with MDFIC. Interacts with SOX15; the interaction enhances HAND1-induced differentiation of trophoblast giant cells. Post-translationally, phosphorylation by PLK4 disrupts the interaction with MDFIC and leads to translocation into the nucleoplasm, allowing dimerization and transcription factor activity. Smooth muscle cells of the gut and adrenal tissue.

The protein resides in the nucleus. Its subcellular location is the nucleoplasm. The protein localises to the nucleolus. Transcription factor that plays an essential role in both trophoblast giant cell differentiation and in cardiac morphogenesis. Binds the DNA sequence 5'-NRTCTG-3' (non-canonical E-box). Acts as a transcriptional repressor of SOX15. In the adult, could be required for ongoing expression of cardiac-specific genes. This Mus musculus (Mouse) protein is Heart- and neural crest derivatives-expressed protein 1 (Hand1).